The primary structure comprises 135 residues: ATP synthase epsilon chain (135 aa).

It belongs to the ATPase epsilon chain family. F-type ATPases have 2 components, CF(1) - the catalytic core - and CF(0) - the membrane proton channel. CF(1) has five subunits: alpha(3), beta(3), gamma(1), delta(1), epsilon(1). CF(0) has three main subunits: a, b and c.

It localises to the cell inner membrane. In terms of biological role, produces ATP from ADP in the presence of a proton gradient across the membrane. This Brucella suis (strain ATCC 23445 / NCTC 10510) protein is ATP synthase epsilon chain.